The following is a 94-amino-acid chain: MSEEKPKEGVKTENDHINLKVAGQDGSVVQFKIKRHTPLSKLMKAYCDRQGLSMRQIRFRFDGQPINETDTPAQLEMEDEDTIDVFQQQTGGVC.

Residue K11 forms a Glycyl lysine isopeptide (Lys-Gly) (interchain with G-Cter in SUMO) linkage. One can recognise a Ubiquitin-like domain in the interval 15–92 (DHINLKVAGQ…IDVFQQQTGG (78 aa)). G92 is covalently cross-linked (Glycyl lysine isopeptide (Gly-Lys) (interchain with K-? in acceptor proteins)). The propeptide occupies 93 to 94 (VC).

This sequence belongs to the ubiquitin family. SUMO subfamily. As to quaternary structure, interacts with sae2 and ube2i. Covalently attached to a number of proteins. In terms of processing, polymeric chains can be formed through Lys-11 cross-linking. Post-translationally, cleavage of precursor form by a sentrin-specific protease is necessary for function.

Its subcellular location is the cytoplasm. It localises to the nucleus. It is found in the PML body. In terms of biological role, ubiquitin-like protein which can be covalently attached to target lysines either as a monomer or as a lysine-linked polymer. Does not seem to be involved in protein degradation and may function as an antagonist of ubiquitin in the degradation process. Plays a role in a number of cellular processes such as nuclear transport, DNA replication and repair, mitosis and signal transduction. Covalent attachment to its substrates requires prior activation by the E1 complex sae1-sae2 and linkage to the E2 enzyme ube2i. The chain is Small ubiquitin-related modifier 3 (sumo3) from Xenopus laevis (African clawed frog).